A 96-amino-acid polypeptide reads, in one-letter code: MAAVWREGDDLLLRLYIQPKASRDSIVGLHGEELKVAITAPPIDGKANAHLSKYLAKLCKVAKGSVVIEKGELGRHKQVRILQPSQIPAEITALIE.

Belongs to the UPF0235 family.

The sequence is that of UPF0235 protein VC0395_A0010/VC395_0502 from Vibrio cholerae serotype O1 (strain ATCC 39541 / Classical Ogawa 395 / O395).